The following is a 610-amino-acid chain: POU domain, class 6, transcription factor 1 (610 aa).

The disordered stretch occupies residues 55–87 (SSAGAAESGGDEEGSGQSLEATEEAQLDGPVTT). The POU-specific domain occupies 448-522 (EEAINLEEIR…VLERWLAEAE (75 aa)). The segment at residues 543-602 (KRKRRTSFTPQAIEVLNTYFEKNSLPTGQEITEIAKELNYDREVVRVWFCNRRQTLKNTS) is a DNA-binding region (homeobox).

Belongs to the POU transcription factor family. Class-6 subfamily. Ubiquitously expressed during embryogenesis.

Its subcellular location is the nucleus. Its function is as follows. Transcription factor that binds with high affinity to the motif 5'-TAATGARAT-3'. The polypeptide is POU domain, class 6, transcription factor 1 (pou6f1) (Danio rerio (Zebrafish)).